The following is a 530-amino-acid chain: 4,4'-diapolycopene aldehyde oxidase (530 aa).

Catalysis depends on residues Glu-234 and Cys-268.

Belongs to the aldehyde dehydrogenase family.

It carries out the reaction all-trans-4,4'-diapolycopen-4-al + A + H2O = all-trans-4,4'-diapolycopen-4-oate + AH2 + H(+). The enzyme catalyses all-trans-4,4'-diapolycopene-4,4'-dial + 2 A + 2 H2O = all-trans-4,4'-diapolycopene-4,4'-dioate + 2 AH2 + 2 H(+). It functions in the pathway carotenoid biosynthesis. Involved in the biosynthesis of C30 carotenoids. Catalyzes the oxidation of 4,4'-diapolycopene-4,4'-dial to yield 4,4'-diapolycopene-4,4'-dioic acid. Also able to catalyze the oxidation of 4,4'-diapolycopen-4-al to yield 4,4'-diapolycopen-4-oic acid. The protein is 4,4'-diapolycopene aldehyde oxidase of Methylomonas sp.